Reading from the N-terminus, the 312-residue chain is MAMKRKKISVIGAGFTGATTAFLLAQKELGDIVLVDIPQLENPTKGKALDMLESSPVLGFDANIVGTSDYADTADSDIVVITAGIARKPGMSRDDLVTTNQKIMKQVTKEVVKYSPNCYIIVLTNPVDAMTYTVFKESGFPKNRVIGQSGVLDTARFRTFVAQELNISVKDVTGFVLGGHGDDMVPLVRYSYAGGIPLEKLIPKDRLDAIVERTRKGGGEIVNLLGNGSAYYAPAASLAEMVEAIVKDQRRILPAIAYLEGEYGYEGIYLGVPTILGGNGIEKVIELELTEDEKAALAKSVESVKNVMRVLE.

NAD(+)-binding positions include Gly-12–Gly-17 and Asp-36. Residues Arg-87 and Arg-93 each coordinate substrate. Residues Asn-100 and Leu-123–Asn-125 each bind NAD(+). Asn-125 is a binding site for substrate. Position 149 is a phosphoserine (Ser-149). Arg-156 lines the substrate pocket. His-180 serves as the catalytic Proton acceptor.

This sequence belongs to the LDH/MDH superfamily. MDH type 3 family.

The catalysed reaction is (S)-malate + NAD(+) = oxaloacetate + NADH + H(+). Functionally, catalyzes the reversible oxidation of malate to oxaloacetate. In Geobacillus thermodenitrificans (strain NG80-2), this protein is Malate dehydrogenase.